The primary structure comprises 432 residues: Adenylosuccinate synthetase (432 aa).

GTP is bound by residues 13 to 19 and 41 to 43; these read GDEGKGK and GHT. D14 acts as the Proton acceptor in catalysis. Positions 14 and 41 each coordinate Mg(2+). IMP is bound by residues 14-17, 39-42, T130, R144, Q225, T240, and R304; these read DEGK and NAGH. Catalysis depends on H42, which acts as the Proton donor. Substrate is bound at residue 300 to 306; that stretch reads ATTGRRR. Residues R306, 332 to 334, and 414 to 416 contribute to the GTP site; these read KLD and STG.

This sequence belongs to the adenylosuccinate synthetase family. Homodimer. The cofactor is Mg(2+).

Its subcellular location is the cytoplasm. The enzyme catalyses IMP + L-aspartate + GTP = N(6)-(1,2-dicarboxyethyl)-AMP + GDP + phosphate + 2 H(+). Its pathway is purine metabolism; AMP biosynthesis via de novo pathway; AMP from IMP: step 1/2. Its function is as follows. Plays an important role in the de novo pathway of purine nucleotide biosynthesis. Catalyzes the first committed step in the biosynthesis of AMP from IMP. This Methylococcus capsulatus (strain ATCC 33009 / NCIMB 11132 / Bath) protein is Adenylosuccinate synthetase.